Reading from the N-terminus, the 704-residue chain is DNA ligase (704 aa).

Residues 44 to 48 (DYEYD), 93 to 94 (SI), and Glu-125 contribute to the NAD(+) site. Lys-127 (N6-AMP-lysine intermediate) is an active-site residue. Positions 148, 184, 300, and 324 each coordinate NAD(+). Cys-418, Cys-421, Cys-436, and Cys-442 together coordinate Zn(2+). The 80-residue stretch at 625 to 704 (IISSNISGKI…DEWEHLINEK (80 aa)) folds into the BRCT domain.

Belongs to the NAD-dependent DNA ligase family. LigA subfamily. Requires Mg(2+) as cofactor. Mn(2+) serves as cofactor.

The enzyme catalyses NAD(+) + (deoxyribonucleotide)n-3'-hydroxyl + 5'-phospho-(deoxyribonucleotide)m = (deoxyribonucleotide)n+m + AMP + beta-nicotinamide D-nucleotide.. DNA ligase that catalyzes the formation of phosphodiester linkages between 5'-phosphoryl and 3'-hydroxyl groups in double-stranded DNA using NAD as a coenzyme and as the energy source for the reaction. It is essential for DNA replication and repair of damaged DNA. This chain is DNA ligase, found in Pelobacter propionicus (strain DSM 2379 / NBRC 103807 / OttBd1).